We begin with the raw amino-acid sequence, 283 residues long: Polyamine aminopropyltransferase (283 aa).

Residues 5–238 (TTWIDEYQKG…GIWSWTFASK (234 aa)) form the PABS domain. Glutamine 32 serves as a coordination point for S-methyl-5'-thioadenosine. Spermidine is bound by residues histidine 63 and aspartate 87. S-methyl-5'-thioadenosine is bound by residues glutamate 107 and 139–140 (DG). The active-site Proton acceptor is the aspartate 158. 158–161 (DCSD) serves as a coordination point for spermidine.

It belongs to the spermidine/spermine synthase family. Homodimer or homotetramer.

The protein resides in the cytoplasm. It carries out the reaction S-adenosyl 3-(methylsulfanyl)propylamine + putrescine = S-methyl-5'-thioadenosine + spermidine + H(+). Its pathway is amine and polyamine biosynthesis; spermidine biosynthesis; spermidine from putrescine: step 1/1. Functionally, catalyzes the irreversible transfer of a propylamine group from the amino donor S-adenosylmethioninamine (decarboxy-AdoMet) to putrescine (1,4-diaminobutane) to yield spermidine. In Prochlorococcus marinus (strain MIT 9515), this protein is Polyamine aminopropyltransferase.